A 119-amino-acid polypeptide reads, in one-letter code: Ribonuclease P protein component (119 aa).

It belongs to the RnpA family. In terms of assembly, consists of a catalytic RNA component (M1 or rnpB) and a protein subunit.

It catalyses the reaction Endonucleolytic cleavage of RNA, removing 5'-extranucleotides from tRNA precursor.. Its function is as follows. RNaseP catalyzes the removal of the 5'-leader sequence from pre-tRNA to produce the mature 5'-terminus. It can also cleave other RNA substrates such as 4.5S RNA. The protein component plays an auxiliary but essential role in vivo by binding to the 5'-leader sequence and broadening the substrate specificity of the ribozyme. This is Ribonuclease P protein component from Beutenbergia cavernae (strain ATCC BAA-8 / DSM 12333 / CCUG 43141 / JCM 11478 / NBRC 16432 / NCIMB 13614 / HKI 0122).